A 441-amino-acid chain; its full sequence is Proline--tRNA ligase (441 aa).

This sequence belongs to the class-II aminoacyl-tRNA synthetase family. ProS type 2 subfamily. As to quaternary structure, homodimer.

The protein resides in the cytoplasm. The enzyme catalyses tRNA(Pro) + L-proline + ATP = L-prolyl-tRNA(Pro) + AMP + diphosphate. Catalyzes the attachment of proline to tRNA(Pro) in a two-step reaction: proline is first activated by ATP to form Pro-AMP and then transferred to the acceptor end of tRNA(Pro). The chain is Proline--tRNA ligase from Bartonella henselae (strain ATCC 49882 / DSM 28221 / CCUG 30454 / Houston 1) (Rochalimaea henselae).